The chain runs to 377 residues: Queuine tRNA-ribosyltransferase (377 aa).

The Proton acceptor role is filled by D89. Substrate-binding positions include 89 to 93 (DSGGF), D143, Q187, and G214. The RNA binding stretch occupies residues 245 to 251 (GVGKPED). D264 (nucleophile) is an active-site residue. Positions 269-273 (TRNAR) are RNA binding; important for wobble base 34 recognition. C302, C304, C307, and H333 together coordinate Zn(2+).

The protein belongs to the queuine tRNA-ribosyltransferase family. In terms of assembly, homodimer. Within each dimer, one monomer is responsible for RNA recognition and catalysis, while the other monomer binds to the replacement base PreQ1. Zn(2+) serves as cofactor.

The catalysed reaction is 7-aminomethyl-7-carbaguanine + guanosine(34) in tRNA = 7-aminomethyl-7-carbaguanosine(34) in tRNA + guanine. The protein operates within tRNA modification; tRNA-queuosine biosynthesis. Catalyzes the base-exchange of a guanine (G) residue with the queuine precursor 7-aminomethyl-7-deazaguanine (PreQ1) at position 34 (anticodon wobble position) in tRNAs with GU(N) anticodons (tRNA-Asp, -Asn, -His and -Tyr). Catalysis occurs through a double-displacement mechanism. The nucleophile active site attacks the C1' of nucleotide 34 to detach the guanine base from the RNA, forming a covalent enzyme-RNA intermediate. The proton acceptor active site deprotonates the incoming PreQ1, allowing a nucleophilic attack on the C1' of the ribose to form the product. After dissociation, two additional enzymatic reactions on the tRNA convert PreQ1 to queuine (Q), resulting in the hypermodified nucleoside queuosine (7-(((4,5-cis-dihydroxy-2-cyclopenten-1-yl)amino)methyl)-7-deazaguanosine). In Shewanella sediminis (strain HAW-EB3), this protein is Queuine tRNA-ribosyltransferase.